A 447-amino-acid polypeptide reads, in one-letter code: UPF0210 protein Lreu_0940 (447 aa).

This sequence belongs to the UPF0210 family. As to quaternary structure, homodimer.

The chain is UPF0210 protein Lreu_0940 from Limosilactobacillus reuteri (strain DSM 20016) (Lactobacillus reuteri).